A 195-amino-acid chain; its full sequence is dCTP deaminase (195 aa).

DCTP is bound by residues 105–110, aspartate 123, 131–133, glutamine 152, tyrosine 166, lysine 173, and glutamine 177; these read RSSLGR and TLE. Catalysis depends on glutamate 133, which acts as the Proton donor/acceptor. Positions 159–195 are disordered; that stretch reads KSPAERPYGAERGSKYQGQTGPQASRIQGDREFGGDQ. The segment covering 160–172 has biased composition (basic and acidic residues); the sequence is SPAERPYGAERGS. Positions 174-184 are enriched in polar residues; it reads YQGQTGPQASR. Residues 186–195 show a composition bias toward basic and acidic residues; the sequence is QGDREFGGDQ.

Belongs to the dCTP deaminase family. As to quaternary structure, homotrimer.

The enzyme catalyses dCTP + H2O + H(+) = dUTP + NH4(+). It participates in pyrimidine metabolism; dUMP biosynthesis; dUMP from dCTP (dUTP route): step 1/2. Catalyzes the deamination of dCTP to dUTP. The protein is dCTP deaminase of Natronomonas pharaonis (strain ATCC 35678 / DSM 2160 / CIP 103997 / JCM 8858 / NBRC 14720 / NCIMB 2260 / Gabara) (Halobacterium pharaonis).